A 279-amino-acid polypeptide reads, in one-letter code: Ribosomal RNA small subunit methyltransferase I (279 aa).

Belongs to the methyltransferase superfamily. RsmI family.

It is found in the cytoplasm. The catalysed reaction is cytidine(1402) in 16S rRNA + S-adenosyl-L-methionine = 2'-O-methylcytidine(1402) in 16S rRNA + S-adenosyl-L-homocysteine + H(+). In terms of biological role, catalyzes the 2'-O-methylation of the ribose of cytidine 1402 (C1402) in 16S rRNA. This chain is Ribosomal RNA small subunit methyltransferase I, found in Synechocystis sp. (strain ATCC 27184 / PCC 6803 / Kazusa).